The sequence spans 122 residues: Large ribosomal subunit protein uL14 (122 aa).

Belongs to the universal ribosomal protein uL14 family. As to quaternary structure, part of the 50S ribosomal subunit. Forms a cluster with proteins L3 and L19. In the 70S ribosome, L14 and L19 interact and together make contacts with the 16S rRNA in bridges B5 and B8.

Its function is as follows. Binds to 23S rRNA. Forms part of two intersubunit bridges in the 70S ribosome. This Micrococcus luteus (Micrococcus lysodeikticus) protein is Large ribosomal subunit protein uL14.